We begin with the raw amino-acid sequence, 116 residues long: NADH-ubiquinone oxidoreductase chain 3 (116 aa).

The next 3 helical transmembrane spans lie at 3-23 (LITT…TISF), 56-76 (FFLI…LLPL), and 87-107 (LTLI…IYEW).

The protein belongs to the complex I subunit 3 family.

The protein resides in the mitochondrion membrane. It carries out the reaction a ubiquinone + NADH + 5 H(+)(in) = a ubiquinol + NAD(+) + 4 H(+)(out). Its function is as follows. Core subunit of the mitochondrial membrane respiratory chain NADH dehydrogenase (Complex I) that is believed to belong to the minimal assembly required for catalysis. Complex I functions in the transfer of electrons from NADH to the respiratory chain. The immediate electron acceptor for the enzyme is believed to be ubiquinone. The chain is NADH-ubiquinone oxidoreductase chain 3 (MT-ND3) from Oncorhynchus gorbuscha (Pink salmon).